The sequence spans 251 residues: MSLKSLIAATILAAPLVAGHGAIIKAVGDAGGEGMGLGVVTSTPRDGTRRDPFQQDSTRFKGQQADTFGETVGGGQNDVESMTKAIMAETGSQLPQISPGGSLQMTLHQVNGDGAGPYTCELNDDASGAQWQQIRVTTTPPGRNSRNRDGAMTDFPLVAEIPQRQACTGTVAGQTNVCLVRCMNAARAGPFGGVVAAQLAGSQTPQAARRALAESVKRSELIVSGLKKRGYNIADLSQEEIDELRRDGEIA.

The first 21 residues, 1–21, serve as a signal peptide directing secretion; sequence MSLKSLIAATILAAPLVAGHG. Positions 40-76 are disordered; that stretch reads VTSTPRDGTRRDPFQQDSTRFKGQQADTFGETVGGGQ. Positions 54–66 are enriched in polar residues; the sequence is QQDSTRFKGQQAD.

Its subcellular location is the cytoplasm. Functionally, appressoria-specific virulence factor required for appressorial penetration in host and lesion development. This chain is Appressoria-specific virulence factor GAS1, found in Pyricularia oryzae (strain 70-15 / ATCC MYA-4617 / FGSC 8958) (Rice blast fungus).